Here is a 929-residue protein sequence, read N- to C-terminus: Bifunctional uridylyltransferase/uridylyl-removing enzyme (929 aa).

The uridylyltransferase stretch occupies residues 1 to 379 (MSPSRPAADE…RPAAKRRRVP (379 aa)). Residues 380 to 735 (ESDDFVIDNN…VGFDEARAVT (356 aa)) are uridylyl-removing. The HD domain occupies 495–618 (VDEHLIRCVG…VETVEQMKML (124 aa)). ACT domains lie at 736–818 (ELTI…AVAR) and 849–929 (VIEV…KPAA).

This sequence belongs to the GlnD family. The cofactor is Mg(2+).

The catalysed reaction is [protein-PII]-L-tyrosine + UTP = [protein-PII]-uridylyl-L-tyrosine + diphosphate. It carries out the reaction [protein-PII]-uridylyl-L-tyrosine + H2O = [protein-PII]-L-tyrosine + UMP + H(+). Its activity is regulated as follows. Uridylyltransferase (UTase) activity is inhibited by glutamine, while glutamine activates uridylyl-removing (UR) activity. Its function is as follows. Modifies, by uridylylation and deuridylylation, the PII regulatory proteins (GlnB and homologs), in response to the nitrogen status of the cell that GlnD senses through the glutamine level. Under low glutamine levels, catalyzes the conversion of the PII proteins and UTP to PII-UMP and PPi, while under higher glutamine levels, GlnD hydrolyzes PII-UMP to PII and UMP (deuridylylation). Thus, controls uridylylation state and activity of the PII proteins, and plays an important role in the regulation of nitrogen fixation and metabolism. The chain is Bifunctional uridylyltransferase/uridylyl-removing enzyme from Rhodopseudomonas palustris (strain ATCC BAA-98 / CGA009).